The chain runs to 127 residues: Peroxiredoxin-2 (127 aa).

In terms of domain architecture, Thioredoxin spans L1–Y125. C12 acts as the Cysteine sulfenic acid (-SOH) intermediate in catalysis. At S73 the chain carries Phosphoserine.

This sequence belongs to the peroxiredoxin family. AhpC/Prx1 subfamily. As to quaternary structure, homodimer; disulfide-linked, upon oxidation. 5 homodimers assemble to form a ring-like decamer. Interacts with TIPIN. The enzyme can be inactivated by further oxidation of the cysteine sulfenic acid (C(P)-SOH) to sulphinic acid (C(P)-SO2H) instead of its condensation to a disulfide bond. It can be reactivated by forming a transient disulfide bond with sulfiredoxin SRXN1, which reduces the cysteine sulfinic acid in an ATP- and Mg-dependent manner. In terms of processing, acetylation increases resistance to transition to high molecular-mass complexes. Deacetylated by HDAC6 which decreases reducing activity.

The protein localises to the cytoplasm. The enzyme catalyses a hydroperoxide + [thioredoxin]-dithiol = an alcohol + [thioredoxin]-disulfide + H2O. Its function is as follows. Thiol-specific peroxidase that catalyzes the reduction of hydrogen peroxide and organic hydroperoxides to water and alcohols, respectively. Plays a role in cell protection against oxidative stress by detoxifying peroxides and as sensor of hydrogen peroxide-mediated signaling events. Might participate in the signaling cascades of growth factors and tumor necrosis factor-alpha by regulating the intracellular concentrations of H(2)O(2). This chain is Peroxiredoxin-2 (PRDX2), found in Sus scrofa (Pig).